The primary structure comprises 102 residues: Large ribosomal subunit protein uL24 (102 aa).

The protein belongs to the universal ribosomal protein uL24 family. Part of the 50S ribosomal subunit.

Functionally, one of two assembly initiator proteins, it binds directly to the 5'-end of the 23S rRNA, where it nucleates assembly of the 50S subunit. In terms of biological role, one of the proteins that surrounds the polypeptide exit tunnel on the outside of the subunit. This Limosilactobacillus reuteri (strain DSM 20016) (Lactobacillus reuteri) protein is Large ribosomal subunit protein uL24.